The primary structure comprises 601 residues: Zinc finger CCCH domain-containing protein 33 (601 aa).

ANK repeat units follow at residues 71–101 and 106–138; these read ERRT…EAAR and DGAT…SVDA. Residues 167–180 show a composition bias toward low complexity; the sequence is PAVSPSSSPKKSAS. The tract at residues 167-203 is disordered; sequence PAVSPSSSPKKSASPPSPPPPQEAKKEYPPDLTLPDL. 2 consecutive C3H1-type zinc fingers follow at residues 252 to 280 and 288 to 312; these read SYSC…HGVF and QYRT…HKPD.

The protein is Zinc finger CCCH domain-containing protein 33 of Oryza sativa subsp. japonica (Rice).